The primary structure comprises 242 residues: Proteasome subunit alpha (242 aa).

It belongs to the peptidase T1A family. In terms of assembly, the 20S proteasome core is composed of 14 alpha and 14 beta subunits that assemble into four stacked heptameric rings, resulting in a barrel-shaped structure. The two inner rings, each composed of seven catalytic beta subunits, are sandwiched by two outer rings, each composed of seven alpha subunits. The catalytic chamber with the active sites is on the inside of the barrel. Has a gated structure, the ends of the cylinder being occluded by the N-termini of the alpha-subunits. Is capped by the proteasome-associated ATPase, ARC.

The protein resides in the cytoplasm. Its pathway is protein degradation; proteasomal Pup-dependent pathway. Its activity is regulated as follows. The formation of the proteasomal ATPase ARC-20S proteasome complex, likely via the docking of the C-termini of ARC into the intersubunit pockets in the alpha-rings, may trigger opening of the gate for substrate entry. Interconversion between the open-gate and close-gate conformations leads to a dynamic regulation of the 20S proteasome proteolysis activity. Component of the proteasome core, a large protease complex with broad specificity involved in protein degradation. In Renibacterium salmoninarum (strain ATCC 33209 / DSM 20767 / JCM 11484 / NBRC 15589 / NCIMB 2235), this protein is Proteasome subunit alpha.